Reading from the N-terminus, the 84-residue chain is Small ribosomal subunit protein bS18 (84 aa).

The protein belongs to the bacterial ribosomal protein bS18 family. Part of the 30S ribosomal subunit. Forms a tight heterodimer with protein bS6.

Functionally, binds as a heterodimer with protein bS6 to the central domain of the 16S rRNA, where it helps stabilize the platform of the 30S subunit. In Maricaulis maris (strain MCS10) (Caulobacter maris), this protein is Small ribosomal subunit protein bS18.